A 492-amino-acid chain; its full sequence is Glutamate--tRNA ligase (492 aa).

The short motif at 13-23 (PSPTGTPHVGM) is the 'HIGH' region element. The short motif at 257–261 (KLSKR) is the 'KMSKS' region element. Residue Lys-260 participates in ATP binding.

This sequence belongs to the class-I aminoacyl-tRNA synthetase family. Glutamate--tRNA ligase type 1 subfamily. As to quaternary structure, monomer.

The protein localises to the cytoplasm. It catalyses the reaction tRNA(Glu) + L-glutamate + ATP = L-glutamyl-tRNA(Glu) + AMP + diphosphate. Catalyzes the attachment of glutamate to tRNA(Glu) in a two-step reaction: glutamate is first activated by ATP to form Glu-AMP and then transferred to the acceptor end of tRNA(Glu). The protein is Glutamate--tRNA ligase of Mycolicibacterium paratuberculosis (strain ATCC BAA-968 / K-10) (Mycobacterium paratuberculosis).